The sequence spans 344 residues: Trace amine-associated receptor 8b (344 aa).

The Extracellular portion of the chain corresponds to 1 to 33 (MTSNFSQATLQLCYENVNASCIKTPYSPGLRVL). 2 N-linked (GlcNAc...) asparagine glycosylation sites follow: asparagine 4 and asparagine 18. 2 disulfide bridges follow: cysteine 21-cysteine 185 and cysteine 104-cysteine 189. A helical transmembrane segment spans residues 34–54 (LYMVFGFGAVLAVCGNLLVVI). Residues 55–67 (SVLHFKQLHSPAN) are Cytoplasmic-facing. The helical transmembrane segment at 68-88 (FLIASLASADFLVGISVMPFS) threads the bilayer. At 89–102 (MVRSIESCWYFGDT) the chain is on the extracellular side. The chain crosses the membrane as a helical span at residues 103-127 (FCSLHSCCDAAFCYSSLFHLCFISV). Over 128 to 146 (DRYIAVTEPLVYPTKFTMS) the chain is Cytoplasmic. A helical transmembrane segment spans residues 147–167 (VSGICISISWILPLVYSSAVF). Residues 168-196 (YTGISATGIENLVSALNCVGGCQVAINQD) lie on the Extracellular side of the membrane. Residues 197–217 (WVLISFLLFFIPTLVMIILYS) traverse the membrane as a helical segment. The Cytoplasmic segment spans residues 218–256 (KIFLVAKQQAVKIETSISGSKGESSLESHKARVAKRERK). A helical transmembrane segment spans residues 257–277 (AAKTLGVTVMAFMVSWLPYTI). The Extracellular segment spans residues 278 to 295 (DTLIDAFMGFITPAYVYE). Residues 296–319 (ICGWIAYYNSAMNPLIYAFFYPWF) form a helical membrane-spanning segment. Topologically, residues 320–344 (RKAIKLILSGKILKGHSSTTSLFSE) are cytoplasmic.

Belongs to the G-protein coupled receptor 1 family.

The protein resides in the cell membrane. Olfactory receptor activated by trace amines. Trace amine compounds are enriched in animal body fluids and act on trace amine-associated receptors (TAARs) to elicit both intraspecific and interspecific innate behaviors. Ligand-binding causes a conformation change that triggers signaling via G(s)-class of G alpha proteins (GNAL or GNAS). The protein is Trace amine-associated receptor 8b of Rattus norvegicus (Rat).